A 141-amino-acid chain; its full sequence is Small ribosomal subunit protein uS12 (141 aa).

The tract at residues 118–141 is disordered; it reads TGVDKRRQQRSAYGAKRPKADKKK.

The protein belongs to the universal ribosomal protein uS12 family. In terms of assembly, part of the 30S ribosomal subunit. Contacts proteins S8 and S17. May interact with IF1 in the 30S initiation complex.

Functionally, with S4 and S5 plays an important role in translational accuracy. Its function is as follows. Interacts with and stabilizes bases of the 16S rRNA that are involved in tRNA selection in the A site and with the mRNA backbone. Located at the interface of the 30S and 50S subunits, it traverses the body of the 30S subunit contacting proteins on the other side and probably holding the rRNA structure together. The combined cluster of proteins S8, S12 and S17 appears to hold together the shoulder and platform of the 30S subunit. In Mycoplasmoides gallisepticum (strain R(low / passage 15 / clone 2)) (Mycoplasma gallisepticum), this protein is Small ribosomal subunit protein uS12.